The following is a 533-amino-acid chain: Probable G-protein coupled receptor Mth-like 14 (533 aa).

An N-terminal signal peptide occupies residues 1-23; it reads MNLGHWNFLLALISLQTFFNASA. 5 N-linked (GlcNAc...) asparagine glycosylation sites follow: asparagine 20, asparagine 29, asparagine 30, asparagine 36, and asparagine 47. The Extracellular segment spans residues 24-242; sequence QISTVNNSSK…QVEEQIAFAK (219 aa). Residues 86–108 form a disordered region; the sequence is VQSPVDNPLDPADCSQREKYRKQ. Cysteine 120 and cysteine 216 are joined by a disulfide. 3 N-linked (GlcNAc...) asparagine glycosylation sites follow: asparagine 133, asparagine 178, and asparagine 206. Residues 243–263 traverse the membrane as a helical segment; sequence VVFVAVLMLISMPCLLLVSYL. Topologically, residues 264–279 are cytoplasmic; sequence HMTLRLLRNLHGLSLS. A helical transmembrane segment spans residues 280–300; it reads LMSLCLASGYFVHSVVHIYGI. Over 301–303 the chain is Extracellular; sequence PNQ. The chain crosses the membrane as a helical span at residues 304 to 324; it reads GFIGYVIQFCILSYFFWYLCI. The Cytoplasmic portion of the chain corresponds to 325–347; sequence CFNVLLNVWYKLPCCIQCSKSWA. A helical transmembrane segment spans residues 348–368; that stretch reads TFNFACYAVFAFSGPATIVAL. The Extracellular portion of the chain corresponds to 369-395; the sequence is TVQKGLPGMPSYFLQGLTESIRDSQRY. Residues 396-416 form a helical membrane-spanning segment; sequence FIPPVSTILFLSFLLNIISFF. Over 417–451 the chain is Cytoplasmic; the sequence is GFQRISGYAKAEKNIQERKCLFDQQKYEDVKKDAK. The helical transmembrane segment at 452–472 threads the bilayer; that stretch reads CVSLLGIIMVVSWLLEIITFY. Residues 473 to 480 lie on the Extracellular side of the membrane; it reads SGSNSNYL. Residues 481–501 form a helical membrane-spanning segment; it reads ILCDMVNGLQGVWVLLIFLVV. The Cytoplasmic segment spans residues 502 to 533; it reads RRRRTIILRWWYDRGSHEIEGTELQALSNSPT.

This sequence belongs to the G-protein coupled receptor 2 family. Mth subfamily.

Its subcellular location is the cell membrane. The sequence is that of Probable G-protein coupled receptor Mth-like 14 (mthl14) from Drosophila melanogaster (Fruit fly).